The chain runs to 1440 residues: Gag-Pro-Pol polyprotein (1440 aa).

A lipid anchor (N-myristoyl glycine; by host) is attached at G2. A disordered region spans residues 93 to 117 (AREAPPSAPPADDPQKPPPYPEHAQ). The short motif at 98–101 (PSAP) is the PTAP/PSAP motif element. Positions 98 to 113 (PSAPPADDPQKPPPYP) are enriched in pro residues. Positions 109-112 (PPPY) match the PPXY motif motif. 2 consecutive CCHC-type zinc fingers follow at residues 349-366 (QPCF…DCKQ) and 372-389 (GPCP…DCPQ). Residues 457–535 (VQALLDTGAD…DQWTILGRDA (79 aa)) enclose the Peptidase A2 domain. D462 serves as the catalytic For protease activity; shared with dimeric partner. Residues 593 to 783 (LEAKHIEPYQ…GSIHFLGQVI (191 aa)) form the Reverse transcriptase domain. Mg(2+) is bound by residues D659, D734, D735, D1019, E1052, D1074, D1135, D1208, and D1265. The RNase H type-1 domain maps to 1010–1143 (IDHAPCLFSD…TDALMLAPLL (134 aa)). The region spanning 1197–1366 (RGHAPNVIWQ…PSIPENTLPP (170 aa)) is the Integrase catalytic domain. The segment at residues 1371 to 1420 (KWYYYKIPGLTNPRWSGPVQSLKEAAGAALIPVGGSHLWIPWRLLKRGIC) is a DNA-binding region (integrase-type).

Interacts with human TSG101. This interaction is essential for budding and release of viral particles. Mg(2+) is required as a cofactor. In terms of processing, specific enzymatic cleavages by the viral protease yield mature proteins. The polyprotein is cleaved during and after budding, this process is termed maturation. The protease is autoproteolytically processed at its N- and C-termini.

The protein localises to the virion. It catalyses the reaction Endonucleolytic cleavage to 5'-phosphomonoester.. The catalysed reaction is DNA(n) + a 2'-deoxyribonucleoside 5'-triphosphate = DNA(n+1) + diphosphate. Matrix protein p19 targets Gag, Gag-Pro and Gag-Pro-Pol polyproteins to the plasma membrane via a multipartite membrane binding signal, that includes its myristoylated N-terminus. Also mediates nuclear localization of the preintegration complex. In terms of biological role, capsid protein p24 forms the conical core of the virus that encapsulates the genomic RNA-nucleocapsid complex. Functionally, nucleocapsid protein p15 is involved in the packaging and encapsidation of two copies of the genome. Its function is as follows. The aspartyl protease mediates proteolytic cleavages of Gag, Gag-Pro and Gag-Pro-Pol polyproteins during or shortly after the release of the virion from the plasma membrane. Cleavages take place as an ordered, step-wise cascade to yield mature proteins. This process is called maturation. Displays maximal activity during the budding process just prior to particle release from the cell. Hydrolyzes host EIF4GI in order to shut off the capped cellular mRNA translation. The resulting inhibition of cellular protein synthesis serves to ensure maximal viral gene expression and to evade host immune response. Reverse transcriptase (RT) is a multifunctional enzyme that converts the viral RNA genome into dsDNA in the cytoplasm, shortly after virus entry into the cell. This enzyme displays a DNA polymerase activity that can copy either DNA or RNA templates, and a ribonuclease H (RNase H) activity that cleaves the RNA strand of RNA-DNA heteroduplexes in a partially processive 3' to 5'-endonucleasic mode. Conversion of viral genomic RNA into dsDNA requires many steps. A tRNA-Pro binds to the primer-binding site (PBS) situated at the 5'-end of the viral RNA. RT uses the 3' end of the tRNA primer to perform a short round of RNA-dependent minus-strand DNA synthesis. The reading proceeds through the U5 region and ends after the repeated (R) region which is present at both ends of viral RNA. The portion of the RNA-DNA heteroduplex is digested by the RNase H, resulting in a ssDNA product attached to the tRNA primer. This ssDNA/tRNA hybridizes with the identical R region situated at the 3' end of viral RNA. This template exchange, known as minus-strand DNA strong stop transfer, can be either intra- or intermolecular. RT uses the 3' end of this newly synthesized short ssDNA to perform the RNA-dependent minus-strand DNA synthesis of the whole template. RNase H digests the RNA template except for a polypurine tract (PPT) situated at the 5' end of the genome. It is not clear if both polymerase and RNase H activities are simultaneous. RNase H probably can proceed both in a polymerase-dependent (RNA cut into small fragments by the same RT performing DNA synthesis) and a polymerase-independent mode (cleavage of remaining RNA fragments by free RTs). Secondly, RT performs DNA-directed plus-strand DNA synthesis using the PPT that has not been removed by RNase H as primer. PPT and tRNA primers are then removed by RNase H. The 3' and 5' ssDNA PBS regions hybridize to form a circular dsDNA intermediate. Strand displacement synthesis by RT to the PBS and PPT ends produces a blunt ended, linear dsDNA copy of the viral genome that includes long terminal repeats (LTRs) at both ends. In terms of biological role, integrase catalyzes viral DNA integration into the host chromosome, by performing a series of DNA cutting and joining reactions. This enzyme activity takes place after virion entry into a cell and reverse transcription of the RNA genome in dsDNA. The first step in the integration process is 3' processing. This step requires a complex comprising the viral genome, matrix protein, and integrase. This complex is called the pre-integration complex (PIC). The integrase protein removes 2 nucleotides from each 3' end of the viral DNA, leaving recessed dinucleotides OH's at the 3' ends. In the second step, the PIC access cell chromosomes during cell division. The third step, termed strand transfer, the integrase protein joins the previously processed 3' ends to the 5'-ends of strands of target cellular DNA at the site of integration. The 5'-ends are produced by integrase-catalyzed staggered cuts, 5 bp apart. A Y-shaped, gapped, recombination intermediate results, with the 5'-ends of the viral DNA strands and the 3' ends of target DNA strands remaining unjoined, flanking a gap of 5 bp. The last step is viral DNA integration into host chromosome. This involves host DNA repair synthesis in which the 5 bp gaps between the unjoined strands (see above) are filled in and then ligated. The polypeptide is Gag-Pro-Pol polyprotein (gag-pro-pol) (Human T-cell leukemia virus 3 (strain Pyl43) (HTLV-3)).